Reading from the N-terminus, the 638-residue chain is Outer dense fiber protein 2 (638 aa).

The residue at position 73 (threonine 73) is a Phosphothreonine. Position 76 is a phosphoserine; by TSSK4 (serine 76). Residues serine 87 and serine 90 each carry the phosphoserine modification. Threonine 91 is modified (phosphothreonine). Serine 96 and serine 110 each carry phosphoserine. Residue lysine 119 forms a Glycyl lysine isopeptide (Lys-Gly) (interchain with G-Cter in SUMO2) linkage. The residue at position 120 (serine 120) is a Phosphoserine. Positions 125–198 (QKGERQMAKR…MSKLVEAEMD (74 aa)) form a coiled coil. Position 212 is a phosphothreonine (threonine 212). Coiled-coil stretches lie at residues 226-404 (DINT…AEQL) and 442-616 (EIIV…SDLR). Serine 242 is modified (phosphoserine). The segment at 373–396 (KQKGDRDKESLKKAIRAQKERAEK) is disordered. At serine 613 the chain carries Phosphoserine.

The protein belongs to the ODF2 family. Self-associates. Associates with microtubules and forms a fibrillar structure partially linked to the microtubule network. Interacts via its C-terminus with PLK1. Interacts with ODF1. Localized at the distal/subdistal appendages of mother centrioles. Interacts with MARK4; the interaction is required for localization of ODF2 to centrioles. Interacts with TSSK4. Interacts with AKNA. Interacts with QRICH2. Interacts with CFAP58. Interacts with BBOF1. Interacts with CCDC38. Interacts with CCDC42. In terms of processing, tyrosine phosphorylated. Phosphorylated on Ser-76 by TSSK4.

It is found in the cytoplasm. It localises to the cytoskeleton. Its subcellular location is the microtubule organizing center. The protein resides in the centrosome. The protein localises to the cell projection. It is found in the cilium. It localises to the centriole. Its subcellular location is the spindle pole. The protein resides in the flagellum. Functionally, seems to be a major component of sperm tail outer dense fibers (ODF). ODFs are filamentous structures located on the outside of the axoneme in the midpiece and principal piece of the mammalian sperm tail and may help to maintain the passive elastic structures and elastic recoil of the sperm tail. May have a modulating influence on sperm motility. Functions as a general scaffold protein that is specifically localized at the distal/subdistal appendages of mother centrioles. Component of the centrosome matrix required for the localization of PLK1 and NIN to the centrosomes. Required for the formation and/or maintenance of normal CETN1 assembly. This Macaca fascicularis (Crab-eating macaque) protein is Outer dense fiber protein 2 (ODF2).